The following is a 412-amino-acid chain: Aspartate kinase Ask_LysC (412 aa).

The region spanning 265–332 (LTIRGVPDTP…QGIAAEMGAR (68 aa)) is the ACT domain.

This sequence belongs to the aspartokinase family.

The protein resides in the cytoplasm. The enzyme catalyses L-aspartate + ATP = 4-phospho-L-aspartate + ADP. It functions in the pathway amino-acid biosynthesis; L-lysine biosynthesis via DAP pathway; (S)-tetrahydrodipicolinate from L-aspartate: step 1/4. It participates in amino-acid biosynthesis; L-methionine biosynthesis via de novo pathway; L-homoserine from L-aspartate: step 1/3. The protein operates within amino-acid biosynthesis; L-threonine biosynthesis; L-threonine from L-aspartate: step 1/5. Allosterically and strongly feedback inhibited by tryptophan. Addition of lysine alone slightly enhances activity. The simultaneous addition of lysine and tryptophan leads to very strong feedback inhibition of the enzyme. The feedback control by tryptophan is reduced in the presence of the compatible solutes hydroxyectoine or ectoine. Involved in the biosynthesis of L-aspartate-beta-semialdehyde which is a central intermediate in the biosynthesis of different amino acids (L-lysine, L-methionine, L-threonine). Catalyzes the phosphorylation of the beta-carboxyl group of L-aspartate to yield 4-phospho-L-aspartate. The polypeptide is Aspartate kinase Ask_LysC (lysC) (Stutzerimonas stutzeri (strain A1501) (Pseudomonas stutzeri)).